A 362-amino-acid polypeptide reads, in one-letter code: Methionine import ATP-binding protein MetN (362 aa).

The 240-residue stretch at 2–241 folds into the ABC transporter domain; that stretch reads IHIKNLSKTY…PQHDVTRAMV (240 aa). 38 to 45 contacts ATP; the sequence is GPSGAGKS.

It belongs to the ABC transporter superfamily. Methionine importer (TC 3.A.1.24) family. In terms of assembly, the complex is composed of two ATP-binding proteins (MetN), two transmembrane proteins (MetI) and a solute-binding protein (MetQ).

The protein localises to the cell inner membrane. It carries out the reaction L-methionine(out) + ATP + H2O = L-methionine(in) + ADP + phosphate + H(+). The catalysed reaction is D-methionine(out) + ATP + H2O = D-methionine(in) + ADP + phosphate + H(+). Its function is as follows. Part of the ABC transporter complex MetNIQ involved in methionine import. Responsible for energy coupling to the transport system. This is Methionine import ATP-binding protein MetN from Bordetella avium (strain 197N).